A 695-amino-acid polypeptide reads, in one-letter code: Spermidine/spermine N(1)-acetyltransferase-like protein 1 (695 aa).

Polar residues-rich tracts occupy residues 1–39, 52–68, and 78–98; these read MNQS…QGSA, PSMS…NLPD, and DTWQ…SQLV. Disordered regions lie at residues 1 to 274, 290 to 332, 344 to 375, and 387 to 493; these read MNQS…MNQM, DMKQ…PGMW, ASIS…NQSG, and RQSG…GLSQ. Residues 105–122 are compositionally biased toward low complexity; it reads SQPDPSQPGPSQSGPSQS. Composition is skewed to polar residues over residues 123-179, 197-208, 231-266, 294-310, 355-375, 389-422, and 459-471; these read RMRQ…TGLS, GVQQPGISQQVP, PDTS…QPSP, PSMS…NLPD, APSQ…NQSG, SGGS…TGLS, and PGTS…QTGM. The 167-residue stretch at 529-695 folds into the N-acetyltransferase domain; sequence FQIRHAEAGD…EELLDMAWEE (167 aa). 552–553 is a binding site for substrate; sequence CE. Acetyl-CoA is bound by residues 618–620 and 626–631; these read FYV and GLGIGA. Substrate is bound by residues 650-652 and glutamate 676; that span reads HFL.

This sequence belongs to the acetyltransferase family.

The protein is Spermidine/spermine N(1)-acetyltransferase-like protein 1 (SATL1) of Homo sapiens (Human).